The sequence spans 67 residues: DNA-directed RNA polymerase subunit omega (67 aa).

It belongs to the RNA polymerase subunit omega family. The RNAP catalytic core consists of 2 alpha, 1 beta, 1 beta' and 1 omega subunit. When a sigma factor is associated with the core the holoenzyme is formed, which can initiate transcription.

The enzyme catalyses RNA(n) + a ribonucleoside 5'-triphosphate = RNA(n+1) + diphosphate. In terms of biological role, promotes RNA polymerase assembly. Latches the N- and C-terminal regions of the beta' subunit thereby facilitating its interaction with the beta and alpha subunits. The chain is DNA-directed RNA polymerase subunit omega from Bacillus velezensis (strain DSM 23117 / BGSC 10A6 / LMG 26770 / FZB42) (Bacillus amyloliquefaciens subsp. plantarum).